The following is a 692-amino-acid chain: Methionine--tRNA ligase (692 aa).

The 'HIGH' region motif lies at 15–25 (PYANGPIHLGH). Zn(2+)-binding residues include Cys146, Cys149, Cys159, and Cys162. The short motif at 332 to 336 (KMSKS) is the 'KMSKS' region element. Lys335 serves as a coordination point for ATP. The disordered stretch occupies residues 552 to 577 (TTEAAPEKKAKKSAETADVAVDTRSP). Residues 556–566 (APEKKAKKSAE) are compositionally biased toward basic and acidic residues. A tRNA-binding domain is found at 591–692 (DFAKLDLRIA…EGAQPGMRVK (102 aa)).

This sequence belongs to the class-I aminoacyl-tRNA synthetase family. MetG type 1 subfamily. In terms of assembly, homodimer. The cofactor is Zn(2+).

The protein localises to the cytoplasm. It catalyses the reaction tRNA(Met) + L-methionine + ATP = L-methionyl-tRNA(Met) + AMP + diphosphate. Its function is as follows. Is required not only for elongation of protein synthesis but also for the initiation of all mRNA translation through initiator tRNA(fMet) aminoacylation. This is Methionine--tRNA ligase from Shewanella sediminis (strain HAW-EB3).